Consider the following 190-residue polypeptide: Translation initiation factor IF-3 (190 aa).

Belongs to the IF-3 family. Monomer.

It is found in the cytoplasm. IF-3 binds to the 30S ribosomal subunit and shifts the equilibrium between 70S ribosomes and their 50S and 30S subunits in favor of the free subunits, thus enhancing the availability of 30S subunits on which protein synthesis initiation begins. The polypeptide is Translation initiation factor IF-3 (Prochlorococcus marinus (strain AS9601)).